The primary structure comprises 429 residues: Glutamate-1-semialdehyde 2,1-aminomutase (429 aa).

The residue at position 270 (K270) is an N6-(pyridoxal phosphate)lysine.

Belongs to the class-III pyridoxal-phosphate-dependent aminotransferase family. HemL subfamily. Homodimer. Requires pyridoxal 5'-phosphate as cofactor.

Its subcellular location is the cytoplasm. The enzyme catalyses (S)-4-amino-5-oxopentanoate = 5-aminolevulinate. It participates in porphyrin-containing compound metabolism; protoporphyrin-IX biosynthesis; 5-aminolevulinate from L-glutamyl-tRNA(Glu): step 2/2. The protein is Glutamate-1-semialdehyde 2,1-aminomutase of Cupriavidus pinatubonensis (strain JMP 134 / LMG 1197) (Cupriavidus necator (strain JMP 134)).